An 827-amino-acid polypeptide reads, in one-letter code: Centrosomal protein of 95 kDa (827 aa).

Disordered stretches follow at residues 115 to 145 (ISESSPNKSETEQYSKDSHGEEAGEDLERTE), 183 to 249 (GDTA…MVPS), 308 to 372 (FLTS…MSEK), 388 to 476 (LGDR…DSCH), and 489 to 558 (ELRK…KASP). Basic and acidic residues predominate over residues 123-145 (SETEQYSKDSHGEEAGEDLERTE). Positions 187 to 199 (HTFSQRSNGAQNS) are enriched in polar residues. Composition is skewed to basic and acidic residues over residues 327–343 (EATRTRKPSKGERDENR) and 360–372 (PLTEQELHAMSEK). Phosphoserine is present on residues Ser-447, Ser-449, and Ser-451. Coiled coils occupy residues 584-633 (LTKM…VKKE) and 701-795 (LQIQ…DDDA).

It localises to the cytoplasm. The protein resides in the cytoskeleton. It is found in the microtubule organizing center. Its subcellular location is the centrosome. The protein localises to the spindle pole. This is Centrosomal protein of 95 kDa (Cep95) from Mus musculus (Mouse).